A 198-amino-acid polypeptide reads, in one-letter code: ATP-dependent Clp protease proteolytic subunit (198 aa).

Ser98 functions as the Nucleophile in the catalytic mechanism. Residue His123 is part of the active site.

It belongs to the peptidase S14 family. As to quaternary structure, fourteen ClpP subunits assemble into 2 heptameric rings which stack back to back to give a disk-like structure with a central cavity, resembling the structure of eukaryotic proteasomes.

It localises to the cytoplasm. The catalysed reaction is Hydrolysis of proteins to small peptides in the presence of ATP and magnesium. alpha-casein is the usual test substrate. In the absence of ATP, only oligopeptides shorter than five residues are hydrolyzed (such as succinyl-Leu-Tyr-|-NHMec, and Leu-Tyr-Leu-|-Tyr-Trp, in which cleavage of the -Tyr-|-Leu- and -Tyr-|-Trp bonds also occurs).. In terms of biological role, cleaves peptides in various proteins in a process that requires ATP hydrolysis. Has a chymotrypsin-like activity. Plays a major role in the degradation of misfolded proteins. The chain is ATP-dependent Clp protease proteolytic subunit from Bacillus pumilus (strain SAFR-032).